A 209-amino-acid chain; its full sequence is Probable chalcone--flavanone isomerase 3 (209 aa).

Belongs to the chalcone isomerase family.

The catalysed reaction is a chalcone = a flavanone.. Its pathway is secondary metabolite biosynthesis; flavonoid biosynthesis. In terms of biological role, involved in anthocyanin biosynthesis. This chain is Probable chalcone--flavanone isomerase 3 (CHI3), found in Arabidopsis thaliana (Mouse-ear cress).